The primary structure comprises 333 residues: Uroporphyrinogen decarboxylase (333 aa).

Substrate is bound by residues 22–26, Asp71, Tyr145, Ser200, and His310; that span reads RQAGR.

The protein belongs to the uroporphyrinogen decarboxylase family. Homodimer.

Its subcellular location is the cytoplasm. It catalyses the reaction uroporphyrinogen III + 4 H(+) = coproporphyrinogen III + 4 CO2. It participates in porphyrin-containing compound metabolism; protoporphyrin-IX biosynthesis; coproporphyrinogen-III from 5-aminolevulinate: step 4/4. In terms of biological role, catalyzes the decarboxylation of four acetate groups of uroporphyrinogen-III to yield coproporphyrinogen-III. This chain is Uroporphyrinogen decarboxylase, found in Thermoplasma acidophilum (strain ATCC 25905 / DSM 1728 / JCM 9062 / NBRC 15155 / AMRC-C165).